The primary structure comprises 144 residues: MLIPKRVKYRKQHRGRMTGKAKRGNRITFGEYGLQALEPAWITNRQIEAARVAITRSLKRGGKVWIKIFPDKPVTAKPAETRMGGGKGAPEKWVAVVKPGRIMFEVAGVSEELAREAIRLASHKLPIKTRFVKREEMDGEANES.

Belongs to the universal ribosomal protein uL16 family. In terms of assembly, part of the 50S ribosomal subunit.

Its function is as follows. Binds 23S rRNA and is also seen to make contacts with the A and possibly P site tRNAs. The polypeptide is Large ribosomal subunit protein uL16 (Halothermothrix orenii (strain H 168 / OCM 544 / DSM 9562)).